The primary structure comprises 274 residues: Large ribosomal subunit protein uL2 (274 aa).

Disordered regions lie at residues 30–54 and 223–274; these read EKSLAFGKKSSGGRNNNGRITIRHK and VAMN…QLKG. The span at 36 to 48 shows a compositional bias: low complexity; that stretch reads GKKSSGGRNNNGR. A compositionally biased stretch (basic and acidic residues) spans 263 to 274; it reads KFSDKYIKQLKG.

The protein belongs to the universal ribosomal protein uL2 family. In terms of assembly, part of the 50S ribosomal subunit. Forms a bridge to the 30S subunit in the 70S ribosome.

Its function is as follows. One of the primary rRNA binding proteins. Required for association of the 30S and 50S subunits to form the 70S ribosome, for tRNA binding and peptide bond formation. It has been suggested to have peptidyltransferase activity; this is somewhat controversial. Makes several contacts with the 16S rRNA in the 70S ribosome. This chain is Large ribosomal subunit protein uL2, found in Wolbachia sp. subsp. Brugia malayi (strain TRS).